Here is a 418-residue protein sequence, read N- to C-terminus: Pyruvate decarboxylase 1 (418 aa).

Histidine 59 serves as a coordination point for substrate. The interval 337–418 is thiamine pyrophosphate binding; the sequence is DSWFNCQKLK…IFLINNGGYT (82 aa). Mg(2+) is bound by residues aspartate 387, asparagine 414, and glycine 416.

It belongs to the TPP enzyme family. In terms of assembly, homotetramer. A metal cation is required as a cofactor. The cofactor is thiamine diphosphate. As to expression, leaves.

The catalysed reaction is a 2-oxocarboxylate + H(+) = an aldehyde + CO2. This is Pyruvate decarboxylase 1 (PDC1) from Nicotiana tabacum (Common tobacco).